The sequence spans 338 residues: Anthranilate phosphoribosyltransferase (338 aa).

5-phospho-alpha-D-ribose 1-diphosphate-binding positions include glycine 81, 84–85 (GD), threonine 89, 91–94 (NVST), 109–117 (KHGNRSVSS), and serine 121. Anthranilate is bound at residue glycine 81. Serine 93 serves as a coordination point for Mg(2+). Anthranilate is bound at residue asparagine 112. Residue arginine 167 participates in anthranilate binding. Aspartate 226 and glutamate 227 together coordinate Mg(2+).

It belongs to the anthranilate phosphoribosyltransferase family. In terms of assembly, homodimer. Requires Mg(2+) as cofactor.

It carries out the reaction N-(5-phospho-beta-D-ribosyl)anthranilate + diphosphate = 5-phospho-alpha-D-ribose 1-diphosphate + anthranilate. It participates in amino-acid biosynthesis; L-tryptophan biosynthesis; L-tryptophan from chorismate: step 2/5. In terms of biological role, catalyzes the transfer of the phosphoribosyl group of 5-phosphorylribose-1-pyrophosphate (PRPP) to anthranilate to yield N-(5'-phosphoribosyl)-anthranilate (PRA). In Alkalilimnicola ehrlichii (strain ATCC BAA-1101 / DSM 17681 / MLHE-1), this protein is Anthranilate phosphoribosyltransferase.